Reading from the N-terminus, the 227-residue chain is Enolase-phosphatase E1 (227 aa).

Mg(2+)-binding residues include Asp11 and Glu13. Substrate-binding positions include 118–119 (SS) and Lys161. Asp186 is a binding site for Mg(2+).

It belongs to the HAD-like hydrolase superfamily. MasA/MtnC family. In terms of assembly, monomer. The cofactor is Mg(2+).

It localises to the cytoplasm. The protein resides in the nucleus. The catalysed reaction is 5-methylsulfanyl-2,3-dioxopentyl phosphate + H2O = 1,2-dihydroxy-5-(methylsulfanyl)pent-1-en-3-one + phosphate. The protein operates within amino-acid biosynthesis; L-methionine biosynthesis via salvage pathway; L-methionine from S-methyl-5-thio-alpha-D-ribose 1-phosphate: step 3/6. Its pathway is amino-acid biosynthesis; L-methionine biosynthesis via salvage pathway; L-methionine from S-methyl-5-thio-alpha-D-ribose 1-phosphate: step 4/6. Bifunctional enzyme that catalyzes the enolization of 2,3-diketo-5-methylthiopentyl-1-phosphate (DK-MTP-1-P) into the intermediate 2-hydroxy-3-keto-5-methylthiopentenyl-1-phosphate (HK-MTPenyl-1-P), which is then dephosphorylated to form the acireductone 1,2-dihydroxy-3-keto-5-methylthiopentene (DHK-MTPene). This is Enolase-phosphatase E1 from Saccharomyces cerevisiae (strain YJM789) (Baker's yeast).